The primary structure comprises 203 residues: Auxin-responsive protein IAA4 (203 aa).

Positions 1–31 are disordered; sequence MEECKGGGMSPSSSMDSSTHPALSTTSSAAT. Residues 10 to 31 show a composition bias toward low complexity; it reads SPSSSMDSSTHPALSTTSSAAT. Positions 40 to 44 match the EAR-like (transcriptional repression) motif; sequence LRLGL. One can recognise a PB1 domain in the interval 108-202; it reads TLFVKVYMEG…KKLRIARMDK (95 aa).

Belongs to the Aux/IAA family. As to quaternary structure, homodimers and heterodimers.

The protein localises to the nucleus. Its function is as follows. Aux/IAA proteins are short-lived transcriptional factors that function as repressors of early auxin response genes at low auxin concentrations. This chain is Auxin-responsive protein IAA4 (IAA4), found in Oryza sativa subsp. japonica (Rice).